The chain runs to 1006 residues: MDVRCINWFESHGENRFLYLKSRCRNGETVFIRFPHYFYYVVTDEIYQSLSPPPFNARPLGKMRTIDIDETISYNLDIKDRKCSVADMWLIEEPKKRSIQNATMDEFLNISWFYISNGISPDGCYSLDEQYLTKINNGCYHCDDPRNCFAKKIPRFDIPRSYLFLDIECHFDKKFPSVFINPISHTSYCYIDLSGKRLLFTLINEEMLTEQEIQEAVDRGCLRIQSLMEMDYERELVLCSEIVLLRIAKQLLELTFDYVVTFNGHNFDLRYITNRLELLTGEKIIFRSPDKKEAVHLCIYERNQSSHKGVGGMANTTFHVNNNNGTIFFDLYSFIQKSEKLDSYKLDSISKNAFSCMGKVLNRGVREMTFIGDDTTDAKGKAAAFAKVLTTGNYVTVDEDIICKVIRKDIWENGFKVVLSCPTLPNDTYKLSFGKDDVDLAQMYKDYNLNIALDMARYCIHDACLCQYLWEYYGVETKTDAGASTYVLPQSMVFEYRASTVIKGPLLKLLLETKTILVRSETKQKFPYEGGKVFAPKQKMFSNNVLIFDYNSLYPNVCIFGNLSPETLVGVVVSTNRLEEEINNQLLLQKYPPPRYITVHCEPRLPNLISEIAIFDRSIEGTIPRLLRTFLAERARYKKMLKQATSSTEKAIYDSMQYTYKIVANSVYGLMGFRNSALYSYASAKSCTSIGRRMILYLESVLNGAELSNGMLRFANPLSNPFYMDDRDINPIVKTSLPIDYRFRFRSVYGDTDSVFTEIDSQDVDKSIEIAKELERLINNRVLFNNFKIEFEAVYKNLIMQSKKKYTTMKYSASSNSKSVPERINKGTSETRRDVSKFHKNMIKTYKTRLSEMLSEGRMNSNQVCIDILRSLETDLRSEFDSRSSPLELFMLSRMHHSNYKSADNPNMYLVTEYNKNNPETIELGERYYFAYICPANVPWTKKLVNIKTYETIIDRSFKLGSDQRIFYEVYFKRLTSEIVNLLDNKVLCISFFERMFGSKPTFYEA.

It belongs to the DNA polymerase type-B family. Interacts with OPG148. Component of the Uracil-DNA glycosylase(UDG)-OPG148-polymerase complex; OPG148 and OPG116/UDG form a heterodimeric processivity factor that associates with OPG071 to form the processive polymerase holoenzyme.

The catalysed reaction is DNA(n) + a 2'-deoxyribonucleoside 5'-triphosphate = DNA(n+1) + diphosphate. Functionally, catalyzes DNA synthesis. Acquires processivity by associating with a heterodimeric processivity factor comprised of the viral OPG148 and OPG116 proteins, thereby forming the DNA polymerase holoenzyme. Displays 3'- to 5' exonuclease activity. Might participate in viral DNA recombination. Does not perform OPG116/D4synthesis across an abasic site. In Homo sapiens (Human), this protein is DNA polymerase (OPG071).